The chain runs to 206 residues: CASP-like protein 1F1 (206 aa).

The Cytoplasmic portion of the chain corresponds to 1–43 (MCFQFSILYTCYLAHFGVFPRKYLVMAGIEAKFQQNPPLGTHK). The chain crosses the membrane as a helical span at residues 44 to 64 (LFLGAHICLRILTVTATLTAA). Residues 65-92 (WMMITSKQTVEVYGIQVEAKYSYSSAFK) are Extracellular-facing. Residues 93–113 (FFSYANAIACGCSVLTLFPAF) form a helical membrane-spanning segment. The Cytoplasmic portion of the chain corresponds to 114–124 (SLFYRGSTPMK). Residues 125-145 (FFFLFLHDLCMMSLVLAGCAA) traverse the membrane as a helical segment. At 146–177 (ATAIGYVGRYGNNHAGWMAICDQFDEYCNRIR) the chain is on the extracellular side. A helical transmembrane segment spans residues 178–198 (LSLMFSYLAFVFILMLTIMSA). Over 199 to 206 (NKSREIRV) the chain is Cytoplasmic.

This sequence belongs to the Casparian strip membrane proteins (CASP) family. As to quaternary structure, homodimer and heterodimers.

The protein resides in the cell membrane. The polypeptide is CASP-like protein 1F1 (Vitis vinifera (Grape)).